A 348-amino-acid polypeptide reads, in one-letter code: Bombesin receptor-activated protein C6orf89 homolog (348 aa).

The Cytoplasmic portion of the chain corresponds to M1–L58. Residues I59 to I79 form a helical membrane-spanning segment. Residues Q80 to L348 are Extracellular-facing.

As to quaternary structure, homodimer. Interacts with BRS3. Interacts (via N-terminus) with SIN3B. Post-translationally, glycosylated.

The protein localises to the golgi apparatus membrane. The protein resides in the cytoplasm. In terms of biological role, exhibits histone deacetylase (HDAC) enhancer properties. May play a role in cell cycle progression and wound repair of bronchial epithelial cells. This chain is Bombesin receptor-activated protein C6orf89 homolog, found in Mus musculus (Mouse).